A 624-amino-acid chain; its full sequence is Actin-related protein 8 (624 aa).

Methionine 1 is modified (N-acetylmethionine). Residues 1 to 25 (MTQAEKGDTENGKEKGGEKEKEQRG) are compositionally biased toward basic and acidic residues. The tract at residues 1–29 (MTQAEKGDTENGKEKGGEKEKEQRGVKRP) is disordered. Serine 55 and threonine 56 together coordinate ATP. Phosphoserine is present on serine 132. 283 to 286 (DVGD) serves as a coordination point for ATP. Position 412 is a phosphoserine (serine 412). A disordered region spans residues 430–462 (SKQEQSAKATADRKSASKPIGFEGDLRGQSSDL).

The protein belongs to the actin family. ARP8 subfamily. In terms of assembly, component of the chromatin remodeling INO80 complex; specifically part of a complex module associated with the DBINO domain of INO80. Interacts with ACTR5; the interaction is observed in asynchronous (interphase) cells but not in metaphase-arrested cells indicative for a possible dissociation of the INO80 complex in mitotic cells. Exists as monomers and dimers, but the dimer is most probably the biologically relevant form required for stable interactions with histones that exploits the twofold symmetry of the nucleosome core.

The protein resides in the nucleus. It localises to the chromosome. Functionally, plays an important role in the functional organization of mitotic chromosomes. Exhibits low basal ATPase activity, and unable to polymerize. Its function is as follows. Proposed core component of the chromatin remodeling INO80 complex which is involved in transcriptional regulation, DNA replication and probably DNA repair. Required for the recruitment of INO80 (and probably the INO80 complex) to sites of DNA damage. Strongly prefer nucleosomes and H3-H4 tetramers over H2A-H2B dimers, suggesting it may act as a nucleosome recognition module within the complex. This chain is Actin-related protein 8 (ACTR8), found in Homo sapiens (Human).